The following is a 671-amino-acid chain: K(+)-insensitive pyrophosphate-energized proton pump (671 aa).

5 consecutive transmembrane segments (helical) span residues 4–24, 57–77, 79–99, 128–148, and 156–176; these read LIFTAPLAGLISLTFAAFFAK, TIAVVSVIISLLILFLLDEGL, IAAGFLAGAISSAAAGYIGMS, AVTGLAVIGLALLGTSSLYIL, and VGFGFGASLISLFARAGGGIF. Residue K178 participates in substrate binding. D181, D185, N208, and D211 together coordinate Mg(2+). 6 helical membrane-spanning segments follow: residues 223–243, 249–269, 285–305, 310–330, 365–385, and 393–413; these read LFETYVVTSLAAMLLGSLIIG, VLYPLMLGSAAIFASIISVFF, GVGGSTVLSLIAFYYITGFLM, FFYVTVAGVVITVLMVIVTEY, TLVPAVVIAAGILVSYFIVGG, and LYGIAIASVAMLSTAGMIVAL. D421 lines the Mg(2+) pocket. The next 4 membrane-spanning stretches (helical) occupy residues 452 to 472, 490 to 510, 558 to 578, and 579 to 599; these read AVTKGYAIGSTALGALALFAD, VVLSGILLGAVLPFLFSAVMM, MAMPGFLAVIIPLLTGFFLGP, and EALAGLLTGLIVVGFMLALMM. The Ca(2+) site is built by D607, D633, and D637. K640 contacts substrate. Residues 650 to 670 traverse the membrane as a helical segment; sequence LIKVVNMVAILFSPLIIGGGF.

The protein belongs to the H(+)-translocating pyrophosphatase (TC 3.A.10) family. K(+)-insensitive subfamily. In terms of assembly, homodimer. Mg(2+) serves as cofactor.

The protein resides in the cell membrane. It catalyses the reaction diphosphate + H2O + H(+)(in) = 2 phosphate + 2 H(+)(out). Its function is as follows. Proton pump that utilizes the energy of pyrophosphate hydrolysis as the driving force for proton movement across the membrane. Generates a proton motive force. This chain is K(+)-insensitive pyrophosphate-energized proton pump, found in Methanosarcina mazei (strain ATCC BAA-159 / DSM 3647 / Goe1 / Go1 / JCM 11833 / OCM 88) (Methanosarcina frisia).